Consider the following 241-residue polypeptide: Large ribosomal subunit protein uL1 (241 aa).

The protein belongs to the universal ribosomal protein uL1 family. Part of the 50S ribosomal subunit.

Binds directly to 23S rRNA. The L1 stalk is quite mobile in the ribosome, and is involved in E site tRNA release. In terms of biological role, protein L1 is also a translational repressor protein, it controls the translation of the L11 operon by binding to its mRNA. In Streptomyces avermitilis (strain ATCC 31267 / DSM 46492 / JCM 5070 / NBRC 14893 / NCIMB 12804 / NRRL 8165 / MA-4680), this protein is Large ribosomal subunit protein uL1.